Consider the following 327-residue polypeptide: Phenylalanine--tRNA ligase alpha subunit (327 aa).

Glutamate 252 lines the Mg(2+) pocket.

This sequence belongs to the class-II aminoacyl-tRNA synthetase family. Phe-tRNA synthetase alpha subunit type 1 subfamily. As to quaternary structure, tetramer of two alpha and two beta subunits. Requires Mg(2+) as cofactor.

The protein resides in the cytoplasm. The catalysed reaction is tRNA(Phe) + L-phenylalanine + ATP = L-phenylalanyl-tRNA(Phe) + AMP + diphosphate + H(+). In Aeromonas hydrophila subsp. hydrophila (strain ATCC 7966 / DSM 30187 / BCRC 13018 / CCUG 14551 / JCM 1027 / KCTC 2358 / NCIMB 9240 / NCTC 8049), this protein is Phenylalanine--tRNA ligase alpha subunit.